Reading from the N-terminus, the 150-residue chain is Small ribosomal subunit protein uS13 (150 aa).

The protein belongs to the universal ribosomal protein uS13 family. As to quaternary structure, part of the 30S ribosomal subunit. Forms a loose heterodimer with protein S19. Forms two bridges to the 50S subunit in the 70S ribosome.

In terms of biological role, located at the top of the head of the 30S subunit, it contacts several helices of the 16S rRNA. In the 70S ribosome it contacts the 23S rRNA (bridge B1a) and protein L5 of the 50S subunit (bridge B1b), connecting the 2 subunits; these bridges are implicated in subunit movement. This is Small ribosomal subunit protein uS13 from Methanocorpusculum labreanum (strain ATCC 43576 / DSM 4855 / Z).